Here is a 96-residue protein sequence, read N- to C-terminus: Neurotoxin 23 (96 aa).

The first 22 residues, 1–22 (MKNIVIIITVAVLFNLFGESLQ), serve as a signal peptide directing secretion. Residues 26 to 89 (FETYPLNQDD…FLAEIIDTCN (64 aa)) form the LCN-type CS-alpha/beta domain. 3 cysteine pairs are disulfide-bonded: Cys-40/Cys-63, Cys-49/Cys-68, and Cys-53/Cys-70.

It belongs to the long (3 C-C) scorpion toxin superfamily. As to expression, expressed by the venom gland.

It is found in the secreted. The polypeptide is Neurotoxin 23 (Lychas mucronatus (Chinese swimming scorpion)).